Here is a 480-residue protein sequence, read N- to C-terminus: MKRSVAVWLLVGLSLGVPQFGKGDICDPNPCENGGICLPGLADGSFSCECPDGFTDPNCSSVVEVASDEEEPTSAGPCTPNPCHNGGTCEISEAYRGDTFIGYVCKCPRGFNGIHCQHNINECEVEPCKNGGICTDLVANYSCECPGEFMGRNCQYKCSGPLGIEGGIISNQQITASSTHRALFGLQKWYPYYARLNKKGLINAWTAAENDRWPWIQINLQRKMRVTGVITQGAKRIGSPEYIKSYKIAYSNDGKTWAMYKVKGTNEDMVFRGNIDNNTPYANSFTPPIKAQYVRLYPQVCRRHCTLRMELLGCELSGCSEPLGMKSGHIQDYQITASSIFRTLNMDMFTWEPRKARLDKQGKVNAWTSGHNDQSQWLQVDLLVPTKVTGIITQGAKDFGHVQFVGSYKLAYSNDGEHWTVYQDEKQRKDKVFQGNFDNDTHRKNVIDPPIYARHIRILPWSWYGRITLRSELLGCTEEE.

The signal sequence occupies residues 1–23; that stretch reads MKRSVAVWLLVGLSLGVPQFGKG. The 37-residue stretch at 24–60 folds into the EGF-like 1 domain; it reads DICDPNPCENGGICLPGLADGSFSCECPDGFTDPNCS. 3 disulfide bridges follow: Cys-26–Cys-37, Cys-31–Cys-48, and Cys-50–Cys-59. A glycan (O-linked (GalNAc...) threonine) is linked at Thr-73. EGF-like domains lie at 74-117 and 119-155; these read SAGP…IHCQ and NINE…RNCQ. Cystine bridges form between Cys-78-Cys-89, Cys-83-Cys-105, and Cys-107-Cys-116. O-linked (Fuc...) threonine glycosylation is present at Thr-88. A Cell attachment site motif is present at residues 96 to 98; that stretch reads RGD. Ca(2+) contacts are provided by Asn-119, Ile-120, and Glu-122. Disulfide bonds link Cys-123–Cys-134, Cys-128–Cys-143, Cys-145–Cys-154, Cys-158–Cys-314, Cys-301–Cys-305, and Cys-319–Cys-476. The Ca(2+) site is built by Asp-136 and Leu-137. Residue Asn-140 is glycosylated (N-linked (GlcNAc...) asparagine). F5/8 type C domains follow at residues 158 to 314 and 319 to 476; these read CSGP…LLGC and CSEP…LLGC.

The protein localises to the secreted. Functionally, promotes adhesion of endothelial cells through interaction with the alpha-v/beta-3 integrin receptor. Inhibits formation of vascular-like structures. May be involved in regulation of vascular morphogenesis of remodeling in embryonic development. In Homo sapiens (Human), this protein is EGF-like repeat and discoidin I-like domain-containing protein 3 (EDIL3).